The primary structure comprises 163 residues: Allophycocyanin alpha-B chain (163 aa).

Asparagine 71 carries the post-translational modification N4-methylasparagine. Cysteine 81 lines the (2R,3E)-phycocyanobilin pocket.

This sequence belongs to the phycobiliprotein family. In terms of processing, contains one covalently linked bilin chromophore.

The protein resides in the plastid. It is found in the chloroplast thylakoid membrane. Allophycocyanin is a photosynthetic bile pigment-protein complex with maximum absorption at approximately 650 nanometers. In Cyanidium caldarium (Red alga), this protein is Allophycocyanin alpha-B chain (apcD).